A 1186-amino-acid polypeptide reads, in one-letter code: MSVKFLLGRAGSGKTSYIIDSITEQLKAAPDGDPIIFLVPEQATFQMEQAILRRSDISGFSRLHILSFQRLSQKVLEEQGGIAKADLSDTGKEMIIKNILLQRKDDLEILEKVAVKSGFSEKLSRLISEARMYEITPEMLEQISQELDLIHLKQKLQEISQVFTDYETFLQHQGYHHQEDRLSKAGQKMEGNNISFLAGSTCYIDGFSGFTPQELKLLEGLLTKCSNIELALTLPPQFTGKIDDELHLFHPTLKTYNQVWELAVNNDIEIKKSKHFPNENEEHRSASSLPRFKDNPALAHLEKEWGKNKINPYDSEPTGLSIVEGTNLRNEIDKIAREIKLLVRDHGMRYKDIAVIVRELESYEPVIKAVFNDYKIPHFLDRKEPVHHHPLVEFLRSSVETVISNWDYEPLFRMLKTGLLPISSEEIFQVENYVLAHGISGKDWKKQGKWNFIANFDLERENIAPSNRNKQYLSEINSIKGKVRDTLLEFDSKLRGINKSESLSAQFKNQEAEEDNLLSVREISTYLWELIEQLQIEYQLEEWSLEAEERKDFVEMQLHNQLWDTVIDLLDQMVTFLGEQKVTLSEYLQIIESGLANIKLGLLPATLDQVLVGTADRSRYHEIKVLFMAGVSDGLYPAKIDDDGIIDDRERITLRQHDVEFAPTTEQKLYQEQYLIYNVLTQPSQKLYLSYPAADSEGRTMSPSTIISDIQEMFPELFQEYQNDGPENDEDFRQYIIDGKKAVSNLIKLINKVGHPEKLAEDKQQLLAYLINEHPDLFYSTPEIKALDYKKSLSPLTQEVIDKLYPNKIATSVSGLESFCQCPFRHFAEQNLRLKEREYFRLEPASLGLFYHAGLKLFWDKLQENNLTWHKLKTEEREALVSEIVEVLSERLKNRILLASERYKYFKKKLHELLSRAVEVLSWYSDDKGFYPVGSEIGFGKDEPLSTLELELPSFPNKKVQLKGRIDRIDTGKKDGDLYLRVIDYKGKSKNLELRDLYYGLDLQLAAYMTVAMRNSDKLTGDQMFPGGMLYFGVENPVVPTDKPVSPAQARDKLKSTLKMRGYLIDDEEVLDLMTREDENSQDLLPYKLRTSSPGFYKNSKVLSEQEFLAVLNYTESKLVELAERVLSGEIAPYPYKDGGYSACTYCPYLAVCQFDLNYKEHKFWNVPAKGDYLSLILEEMEEVKE.

The UvrD-like helicase ATP-binding domain occupies 1-308 (MSVKFLLGRA…AHLEKEWGKN (308 aa)). An ATP-binding site is contributed by 8–15 (GRAGSGKT). One can recognise a UvrD-like helicase C-terminal domain in the interval 288–620 (SLPRFKDNPA…LVGTADRSRY (333 aa)). 4 residues coordinate [4Fe-4S] cluster: C822, C1144, C1147, and C1153.

The protein belongs to the helicase family. AddB/RexB type 1 subfamily. As to quaternary structure, heterodimer of AddA and AddB. The cofactor is Mg(2+). [4Fe-4S] cluster is required as a cofactor.

Its function is as follows. The heterodimer acts as both an ATP-dependent DNA helicase and an ATP-dependent, dual-direction single-stranded exonuclease. Recognizes the chi site generating a DNA molecule suitable for the initiation of homologous recombination. The AddB subunit has 5' -&gt; 3' nuclease activity but not helicase activity. In Natranaerobius thermophilus (strain ATCC BAA-1301 / DSM 18059 / JW/NM-WN-LF), this protein is ATP-dependent helicase/deoxyribonuclease subunit B.